A 466-amino-acid chain; its full sequence is MSGVRIPLFPRFIPHGTVKLESAALKKLNSLELSGGYAVAVSGGVDSITLLNLVAALHKTQATSRPVVLTGNHGFRAEADHETRFVQKRAVALGLDCEILRWNRHRTSSKSQETAREIRYSLLHQWCTEHSVKFLLTAHNKSDQAETVLMHLERGSGIDGLSGMHERSVFGDITIYRPLLGFTRQEILEYATQKQLSWVEDPSNQDPKYRRTFFRNLIAESKNPGVVVDRLCRTTSHMHRALACILHYVRSSLDYCLEFSPLGFITVKSQELRSVPEEIASRLLLLSLMAMGGKDHKPRYSAFWPILTKILQGQDFTPRTLHGCKVRKEPDGNFSIVRELARIETKIGVKTIAETIQWDRRFAIKIMCTHNASAAETTSCSAKHAPNPSEETQNLYITPLGNGSLPEHLVHVNRDVACSLPVLAHGDKVLAYPWQNHNIGVSPTISVEEVLVRRGVINLICHQLYR.

42–47 (SGGVDS) lines the ATP pocket.

Belongs to the tRNA(Ile)-lysidine synthase family.

It localises to the cytoplasm. The catalysed reaction is cytidine(34) in tRNA(Ile2) + L-lysine + ATP = lysidine(34) in tRNA(Ile2) + AMP + diphosphate + H(+). Its function is as follows. Ligates lysine onto the cytidine present at position 34 of the AUA codon-specific tRNA(Ile) that contains the anticodon CAU, in an ATP-dependent manner. Cytidine is converted to lysidine, thus changing the amino acid specificity of the tRNA from methionine to isoleucine. This chain is tRNA(Ile)-lysidine synthase, found in Anaplasma marginale (strain St. Maries).